The following is a 332-amino-acid chain: Glycerol-3-phosphate dehydrogenase [NAD(P)+] (332 aa).

Residues serine 11, phenylalanine 12, lysine 32, and lysine 106 each contribute to the NADPH site. The sn-glycerol 3-phosphate site is built by lysine 106, glycine 137, and serine 139. Position 141 (alanine 141) interacts with NADPH. Residues lysine 192, aspartate 245, serine 255, arginine 256, and asparagine 257 each contribute to the sn-glycerol 3-phosphate site. Lysine 192 serves as the catalytic Proton acceptor. Arginine 256 contributes to the NADPH binding site. Positions 280 and 282 each coordinate NADPH.

The protein belongs to the NAD-dependent glycerol-3-phosphate dehydrogenase family.

The protein resides in the cytoplasm. It carries out the reaction sn-glycerol 3-phosphate + NAD(+) = dihydroxyacetone phosphate + NADH + H(+). The enzyme catalyses sn-glycerol 3-phosphate + NADP(+) = dihydroxyacetone phosphate + NADPH + H(+). It participates in membrane lipid metabolism; glycerophospholipid metabolism. Functionally, catalyzes the reduction of the glycolytic intermediate dihydroxyacetone phosphate (DHAP) to sn-glycerol 3-phosphate (G3P), the key precursor for phospholipid synthesis. The sequence is that of Glycerol-3-phosphate dehydrogenase [NAD(P)+] from Staphylococcus carnosus (strain TM300).